Here is a 309-residue protein sequence, read N- to C-terminus: Protein FdhE (309 aa).

This sequence belongs to the FdhE family.

It is found in the cytoplasm. Functionally, necessary for formate dehydrogenase activity. This Escherichia coli O9:H4 (strain HS) protein is Protein FdhE.